The chain runs to 618 residues: Sodium-coupled monocarboxylate transporter 2 (618 aa).

The Extracellular segment spans residues 1–9 (MEVKNFAVW). The helical transmembrane segment at 10-30 (DYVVFAALFFISSGIGVFFAI) threads the bilayer. The Cytoplasmic portion of the chain corresponds to 31-47 (KERKKATSREFLVGGRQ). Residues 48–68 (MSFGPVGLSLTASFMSAVTVL) traverse the membrane as a helical segment. Residues 69–82 (GTPSEVYRFGASFL) are Extracellular-facing. A helical transmembrane segment spans residues 83-103 (VFFIAYLFVILLTSELFLPVF). The Cytoplasmic portion of the chain corresponds to 104–128 (YRSGITSTYEYLQLRFNKPVRYAAT). A helical transmembrane segment spans residues 129–149 (VIYIVQTILYTGVVVYAPALA). Topologically, residues 150-157 (LNQVTGFD) are extracellular. Residues 158-178 (LWGSVFATGIVCTFYCTLGGL) form a helical membrane-spanning segment. Topologically, residues 179–180 (KA) are cytoplasmic. The chain crosses the membrane as a helical span at residues 181-201 (VVWTDAFQMVVMIVGFLTVLI). At 202-235 (QGSTHAGGFHNVLEQSTNGSRLHIFDFDVDPLRR) the chain is on the extracellular side. The chain crosses the membrane as a helical span at residues 236–256 (HTFWTITVGGTFTWLGIYGVN). Residues 257-275 (QSTIQRCISCKTEKHAKLA) are Cytoplasmic-facing. A helical transmembrane segment spans residues 276-296 (LYFNLLGLWIILVCAVFSGLI). Residues 297–321 (MYSHFKDCDPWTSGIISAPDQLMPY) lie on the Extracellular side of the membrane. A helical membrane pass occupies residues 322–342 (FVMEIFATMPGLPGLFVACAF). Topologically, residues 343–385 (SGTLSTVASSINALATVTFEDFVKSCFPHLSDKLSTWISKGLC) are cytoplasmic. A helical transmembrane segment spans residues 386–406 (LLFGVMCTSMAVAASVMGGVV). Residues 407–411 (QASLS) are Extracellular-facing. Residues 412–432 (IHGMCGGPMLGLFSLGIVFPF) form a helical membrane-spanning segment. Topologically, residues 433–437 (VNWKG) are cytoplasmic. Residues 438–458 (ALGGLLTGITLSFWVAIGAFI) traverse the membrane as a helical segment. The Extracellular segment spans residues 459–504 (YPAPASKTWPLPLSTDQCIKSNVTATGPPVLSSRPGIADTWYSISY). An N-linked (GlcNAc...) asparagine glycan is attached at asparagine 480. A helical transmembrane segment spans residues 505-525 (LYYSAVGCLGCIVAGVIISLI). Over 526–618 (TGRQRGEDIQ…NNMAFETTHF (93 aa)) the chain is Cytoplasmic.

This sequence belongs to the sodium:solute symporter (SSF) (TC 2.A.21) family.

It localises to the apical cell membrane. It carries out the reaction (S)-lactate(out) + Na(+)(out) = (S)-lactate(in) + Na(+)(in). The catalysed reaction is nicotinate(out) + Na(+)(out) = nicotinate(in) + Na(+)(in). It catalyses the reaction pyruvate(out) + Na(+)(out) = pyruvate(in) + Na(+)(in). The enzyme catalyses propanoate(out) + Na(+)(out) = propanoate(in) + Na(+)(in). It carries out the reaction butanoate(out) + Na(+)(out) = butanoate(in) + Na(+)(in). The catalysed reaction is acetoacetate(out) + Na(+)(out) = acetoacetate(in) + Na(+)(in). With respect to regulation, cotransport of monocarboxylates and nicotinate strongly inhibited by ibuprofen, fenoprofen and ketoprofen. Its function is as follows. Acts as an electroneutral and low-affinity sodium (Na(+))-dependent sodium-coupled solute transporter. Catalyzes the transport across the plasma membrane of many monocarboxylates such as lactate, pyruvate, nicotinate, propionate, butyrate and beta-D-hydroxybutyrate. May be responsible for the first step of reabsorption of monocarboxylates from the lumen of the proximal tubule of the kidney and the small intestine. May play also a role in monocarboxylates transport in the retina. This chain is Sodium-coupled monocarboxylate transporter 2, found in Homo sapiens (Human).